The primary structure comprises 401 residues: Argininosuccinate synthase (401 aa).

8–16 (AYSGGLDTS) serves as a coordination point for ATP. Tyr-85 lines the L-citrulline pocket. Position 115 (Gly-115) interacts with ATP. Residues Thr-117, Asn-121, and Asp-122 each coordinate L-aspartate. Asn-121 contributes to the L-citrulline binding site. L-citrulline contacts are provided by Arg-125, Ser-173, Glu-258, and Tyr-270.

This sequence belongs to the argininosuccinate synthase family. Type 1 subfamily. As to quaternary structure, homotetramer.

It is found in the cytoplasm. It carries out the reaction L-citrulline + L-aspartate + ATP = 2-(N(omega)-L-arginino)succinate + AMP + diphosphate + H(+). It functions in the pathway amino-acid biosynthesis; L-arginine biosynthesis; L-arginine from L-ornithine and carbamoyl phosphate: step 2/3. This is Argininosuccinate synthase from Staphylococcus epidermidis (strain ATCC 35984 / DSM 28319 / BCRC 17069 / CCUG 31568 / BM 3577 / RP62A).